A 100-amino-acid chain; its full sequence is Large ribosomal subunit protein uL23 (100 aa).

This sequence belongs to the universal ribosomal protein uL23 family. In terms of assembly, part of the 50S ribosomal subunit. Contacts protein L29, and trigger factor when it is bound to the ribosome.

One of the early assembly proteins it binds 23S rRNA. One of the proteins that surrounds the polypeptide exit tunnel on the outside of the ribosome. Forms the main docking site for trigger factor binding to the ribosome. The protein is Large ribosomal subunit protein uL23 of Mycobacterium sp. (strain JLS).